A 402-amino-acid polypeptide reads, in one-letter code: MSRVSQARNLGKYFLLIDNMLVVLGFFVVFPLISIRFVDQMGWAAVMVGIALGLRQFIQQGLGIFGGAIADRFGAKPMIVTGMLMRAAGFATMGIAHEPWLLWFSCLLSGLGGTLFDPPRSALVVKLIRPQQRGRFFSLLMMQDSASAVIGALLGSWLLQYDFRLVCATGAVLFVLCAAFNAWLLPAWKLSTVRTPVREGMTRVMRDKRFVTYVLTLAGYYMLAVQVMLMLPIMVNDVAGAPSAVKWMYAIEACLSLTLLYPIARWSEKHFRLEHRLMAGLLIMSLSMMPVGMVSGLQQLFTLICLFYIGSIIAEPARETLSASLADARARGSYMGFSRLGLAIGGAIGYIGGGWLFDLGKSAHQPELPWMMLGIIGIFTFLALGWQFSQKRAARRLLERDA.

Over 1-12 the chain is Cytoplasmic; the sequence is MSRVSQARNLGK. A helical membrane pass occupies residues 13 to 33; sequence YFLLIDNMLVVLGFFVVFPLI. Topologically, residues 34 to 98 are periplasmic; sequence SIRFVDQMGW…GFATMGIAHE (65 aa). Residues 99–116 traverse the membrane as a helical segment; sequence PWLLWFSCLLSGLGGTLF. Topologically, residues 117 to 138 are cytoplasmic; it reads DPPRSALVVKLIRPQQRGRFFS. The chain crosses the membrane as a helical span at residues 139 to 159; sequence LLMMQDSASAVIGALLGSWLL. The Periplasmic portion of the chain corresponds to 160 to 164; it reads QYDFR. A helical transmembrane segment spans residues 165–185; that stretch reads LVCATGAVLFVLCAAFNAWLL. Topologically, residues 186–213 are cytoplasmic; it reads PAWKLSTVRTPVREGMTRVMRDKRFVTY. A helical membrane pass occupies residues 214–234; the sequence is VLTLAGYYMLAVQVMLMLPIM. Residues 235–243 lie on the Periplasmic side of the membrane; that stretch reads VNDVAGAPS. The chain crosses the membrane as a helical span at residues 244-264; that stretch reads AVKWMYAIEACLSLTLLYPIA. The Cytoplasmic portion of the chain corresponds to 265–276; it reads RWSEKHFRLEHR. A helical membrane pass occupies residues 277–297; it reads LMAGLLIMSLSMMPVGMVSGL. The Periplasmic portion of the chain corresponds to 298 to 299; the sequence is QQ. Residues 300–320 traverse the membrane as a helical segment; that stretch reads LFTLICLFYIGSIIAEPARET. The Cytoplasmic portion of the chain corresponds to 321 to 339; the sequence is LSASLADARARGSYMGFSR. The helical transmembrane segment at 340-360 threads the bilayer; the sequence is LGLAIGGAIGYIGGGWLFDLG. The Periplasmic portion of the chain corresponds to 361-367; sequence KSAHQPE. Residues 368–388 traverse the membrane as a helical segment; sequence LPWMMLGIIGIFTFLALGWQF. Residues 389–402 lie on the Cytoplasmic side of the membrane; sequence SQKRAARRLLERDA.

This sequence belongs to the major facilitator superfamily. DHA1 family. MdtH (TC 2.A.1.2.21) subfamily.

It is found in the cell inner membrane. This is Multidrug resistance protein MdtH from Shigella flexneri.